Reading from the N-terminus, the 94-residue chain is Large ribosomal subunit protein uL23 (94 aa).

The protein belongs to the universal ribosomal protein uL23 family. As to quaternary structure, part of the 50S ribosomal subunit. Contacts protein L29, and trigger factor when it is bound to the ribosome.

One of the early assembly proteins it binds 23S rRNA. One of the proteins that surrounds the polypeptide exit tunnel on the outside of the ribosome. Forms the main docking site for trigger factor binding to the ribosome. The sequence is that of Large ribosomal subunit protein uL23 from Exiguobacterium sibiricum (strain DSM 17290 / CCUG 55495 / CIP 109462 / JCM 13490 / 255-15).